Reading from the N-terminus, the 545-residue chain is External NADH-ubiquinone oxidoreductase 2, mitochondrial (545 aa).

A mitochondrion-targeting transit peptide spans 1-21; the sequence is MLPRLGFARTARSIHRFKMTQ. 99–129 is an FAD binding site; sequence ELVILGTGWGAISLLKKLDTSLYNVTVVSPR. 260-296 contacts NAD(+); it reads LTFVVVGGGPTGVEFAAELQDYINQDLRKWMPDLSKE.

The protein belongs to the NADH dehydrogenase family.

It is found in the mitochondrion intermembrane space. It carries out the reaction a quinone + NADH + H(+) = a quinol + NAD(+). The enzyme catalyses a ubiquinone + NADH + H(+) = a ubiquinol + NAD(+). Its function is as follows. External NADH dehydrogenase required for optimum cellular growth with a number of nonfermentable carbon sources, including ethanol. With NDE1, performes the mitochondrial oxidation of cytosolic NADH under these growth conditions. Regulates the mitochondrial glycerol-3-phosphate dehydrogenase, GUT2, also involved in cytosolic NADH oxidation. This chain is External NADH-ubiquinone oxidoreductase 2, mitochondrial (NDE2), found in Saccharomyces cerevisiae (strain ATCC 204508 / S288c) (Baker's yeast).